We begin with the raw amino-acid sequence, 353 residues long: Iron(III) enterobactin esterase (353 aa).

Belongs to the Fes family.

The protein localises to the cytoplasm. The catalysed reaction is Fe(III)-enterobactin + 3 H2O + H(+) = Fe(III)-[N-(2,3-dihydroxybenzoyl)-L-serine] + 2 N-(2,3-dihydroxybenzoyl)-L-serine. The enzyme catalyses Fe(III)-enterobactin + H2O = Fe(III)-[N-(2,3-dihydroxybenzoyl)-L-serine]3 + H(+). It carries out the reaction Fe(III)-[N-(2,3-dihydroxybenzoyl)-L-serine]3 + H2O + H(+) = Fe(III)-[N-(2,3-dihydroxybenzoyl)-L-serine]2 + N-(2,3-dihydroxybenzoyl)-L-serine. It catalyses the reaction Fe(III)-[N-(2,3-dihydroxybenzoyl)-L-serine]2 + H2O + H(+) = Fe(III)-[N-(2,3-dihydroxybenzoyl)-L-serine] + N-(2,3-dihydroxybenzoyl)-L-serine. Functionally, catalyzes the hydrolysis of ferric enterobactin (Fe-Ent). Is responsible for the release of iron from ferric enterobactin. The protein is Iron(III) enterobactin esterase of Yersinia enterocolitica.